We begin with the raw amino-acid sequence, 435 residues long: Serine--tRNA ligase (435 aa).

An L-serine-binding site is contributed by 238-240; the sequence is TAE. 269–271 lines the ATP pocket; that stretch reads RKE. Position 292 (Glu292) interacts with L-serine. 356-359 contacts ATP; that stretch reads EISS. Residue Ser391 coordinates L-serine.

The protein belongs to the class-II aminoacyl-tRNA synthetase family. Type-1 seryl-tRNA synthetase subfamily. Homodimer. The tRNA molecule binds across the dimer.

The protein localises to the cytoplasm. It catalyses the reaction tRNA(Ser) + L-serine + ATP = L-seryl-tRNA(Ser) + AMP + diphosphate + H(+). The enzyme catalyses tRNA(Sec) + L-serine + ATP = L-seryl-tRNA(Sec) + AMP + diphosphate + H(+). It functions in the pathway aminoacyl-tRNA biosynthesis; selenocysteinyl-tRNA(Sec) biosynthesis; L-seryl-tRNA(Sec) from L-serine and tRNA(Sec): step 1/1. Catalyzes the attachment of serine to tRNA(Ser). Is also able to aminoacylate tRNA(Sec) with serine, to form the misacylated tRNA L-seryl-tRNA(Sec), which will be further converted into selenocysteinyl-tRNA(Sec). The sequence is that of Serine--tRNA ligase from Leuconostoc mesenteroides subsp. mesenteroides (strain ATCC 8293 / DSM 20343 / BCRC 11652 / CCM 1803 / JCM 6124 / NCDO 523 / NBRC 100496 / NCIMB 8023 / NCTC 12954 / NRRL B-1118 / 37Y).